A 290-amino-acid polypeptide reads, in one-letter code: 4-hydroxybenzoate octaprenyltransferase (290 aa).

8 helical membrane passes run 24-44 (IGFF…HKGI), 48-68 (VVLI…CIIN), 98-118 (LVAL…LNFI), 142-162 (FPQV…FTAI), 171-191 (WLLF…YAMI), 214-234 (FLIG…GWKE), 239-259 (VFYF…QILI), and 270-290 (AFLS…SSFH).

This sequence belongs to the UbiA prenyltransferase family. The cofactor is Mg(2+).

Its subcellular location is the cell inner membrane. It carries out the reaction all-trans-octaprenyl diphosphate + 4-hydroxybenzoate = 4-hydroxy-3-(all-trans-octaprenyl)benzoate + diphosphate. It participates in cofactor biosynthesis; ubiquinone biosynthesis. In terms of biological role, catalyzes the prenylation of para-hydroxybenzoate (PHB) with an all-trans polyprenyl group. Mediates the second step in the final reaction sequence of ubiquinone-8 (UQ-8) biosynthesis, which is the condensation of the polyisoprenoid side chain with PHB, generating the first membrane-bound Q intermediate 3-octaprenyl-4-hydroxybenzoate. The sequence is that of 4-hydroxybenzoate octaprenyltransferase from Blochmanniella pennsylvanica (strain BPEN).